A 1496-amino-acid polypeptide reads, in one-letter code: Chromosome partition protein MukB (1496 aa).

63–70 (GGNGAGKS) contacts ATP. Coiled coils occupy residues 328-493 (KLEL…QRLS), 536-632 (KMQA…APAW), 808-832 (RAAREKHLETLKAERDEVSEQHAER), 861-1171 (NPEE…SAEE), and 1235-1291 (IDAI…LQNI). A flexible hinge region spans residues 694 to 811 (PDGSDDVRLN…EVPLFGRAAR (118 aa)). A compositionally biased stretch (basic and acidic residues) spans 1082 to 1091 (RARSRRDELQ). Residues 1082 to 1101 (RARSRRDELQQRLSQQRSRK) form a disordered region.

Belongs to the SMC family. MukB subfamily. Homodimerization via its hinge domain. Binds to DNA via its C-terminal region. Interacts, and probably forms a ternary complex, with MukE and MukF via its C-terminal region. The complex formation is stimulated by calcium or magnesium. Interacts with tubulin-related protein FtsZ.

It is found in the cytoplasm. It localises to the nucleoid. Functionally, plays a central role in chromosome condensation, segregation and cell cycle progression. Functions as a homodimer, which is essential for chromosome partition. Involved in negative DNA supercoiling in vivo, and by this means organize and compact chromosomes. May achieve or facilitate chromosome segregation by condensation DNA from both sides of a centrally located replisome during cell division. This Actinobacillus pleuropneumoniae serotype 5b (strain L20) protein is Chromosome partition protein MukB.